A 98-amino-acid chain; its full sequence is MVLTRVIRAVGRSTLLETGVAGSGGGQLQLVRLPLRRKYTYRSGALKPMPEITPFGLFGIIATVIPGLLIGATISKNMANFLEENDLFVPSDDDDDDD.

A helical transmembrane segment spans residues 52–72 (ITPFGLFGIIATVIPGLLIGA).

This sequence belongs to the SMDT1/EMRE family.

Its subcellular location is the mitochondrion inner membrane. In terms of biological role, essential regulatory subunit of the mitochondrial calcium uniporter (mcu) channel, a protein that mediates calcium uptake into mitochondria. The protein is Essential MCU regulator, mitochondrial of Anopheles gambiae (African malaria mosquito).